An 88-amino-acid polypeptide reads, in one-letter code: Small ribosomal subunit protein bS20 (88 aa).

A disordered region spans residues 1-27 (MANSKSAKKRALQSEKRRQHNASRRSM).

It belongs to the bacterial ribosomal protein bS20 family.

Binds directly to 16S ribosomal RNA. This is Small ribosomal subunit protein bS20 from Shewanella woodyi (strain ATCC 51908 / MS32).